A 253-amino-acid chain; its full sequence is Ubiquinone/menaquinone biosynthesis C-methyltransferase UbiE (253 aa).

S-adenosyl-L-methionine contacts are provided by residues threonine 76, aspartate 97, and 125–126 (NA).

This sequence belongs to the class I-like SAM-binding methyltransferase superfamily. MenG/UbiE family.

The enzyme catalyses a 2-demethylmenaquinol + S-adenosyl-L-methionine = a menaquinol + S-adenosyl-L-homocysteine + H(+). It carries out the reaction a 2-methoxy-6-(all-trans-polyprenyl)benzene-1,4-diol + S-adenosyl-L-methionine = a 5-methoxy-2-methyl-3-(all-trans-polyprenyl)benzene-1,4-diol + S-adenosyl-L-homocysteine + H(+). Its pathway is quinol/quinone metabolism; menaquinone biosynthesis; menaquinol from 1,4-dihydroxy-2-naphthoate: step 2/2. It functions in the pathway cofactor biosynthesis; ubiquinone biosynthesis. In terms of biological role, methyltransferase required for the conversion of demethylmenaquinol (DMKH2) to menaquinol (MKH2) and the conversion of 2-polyprenyl-6-methoxy-1,4-benzoquinol (DDMQH2) to 2-polyprenyl-3-methyl-6-methoxy-1,4-benzoquinol (DMQH2). This Rhodopseudomonas palustris (strain ATCC BAA-98 / CGA009) protein is Ubiquinone/menaquinone biosynthesis C-methyltransferase UbiE.